Consider the following 288-residue polypeptide: ATP synthase gamma chain (288 aa).

It belongs to the ATPase gamma chain family. As to quaternary structure, F-type ATPases have 2 components, CF(1) - the catalytic core - and CF(0) - the membrane proton channel. CF(1) has five subunits: alpha(3), beta(3), gamma(1), delta(1), epsilon(1). CF(0) has three main subunits: a, b and c.

Its subcellular location is the cell inner membrane. Functionally, produces ATP from ADP in the presence of a proton gradient across the membrane. The gamma chain is believed to be important in regulating ATPase activity and the flow of protons through the CF(0) complex. In Blochmanniella floridana, this protein is ATP synthase gamma chain.